Reading from the N-terminus, the 388-residue chain is Succinate--CoA ligase [ADP-forming] subunit beta (388 aa).

The region spanning 9-244 (KQLFAEYGLP…PSQDDPREAH (236 aa)) is the ATP-grasp domain. Residues Lys-46, 53–55 (GRG), Glu-99, Thr-102, and Glu-107 contribute to the ATP site. Mg(2+) is bound by residues Asn-199 and Asp-213. Substrate contacts are provided by residues Asn-264 and 321 to 323 (GIV).

It belongs to the succinate/malate CoA ligase beta subunit family. Heterotetramer of two alpha and two beta subunits. It depends on Mg(2+) as a cofactor.

The enzyme catalyses succinate + ATP + CoA = succinyl-CoA + ADP + phosphate. It catalyses the reaction GTP + succinate + CoA = succinyl-CoA + GDP + phosphate. The protein operates within carbohydrate metabolism; tricarboxylic acid cycle; succinate from succinyl-CoA (ligase route): step 1/1. Its function is as follows. Succinyl-CoA synthetase functions in the citric acid cycle (TCA), coupling the hydrolysis of succinyl-CoA to the synthesis of either ATP or GTP and thus represents the only step of substrate-level phosphorylation in the TCA. The beta subunit provides nucleotide specificity of the enzyme and binds the substrate succinate, while the binding sites for coenzyme A and phosphate are found in the alpha subunit. The polypeptide is Succinate--CoA ligase [ADP-forming] subunit beta (Ectopseudomonas mendocina (strain ymp) (Pseudomonas mendocina)).